The sequence spans 158 residues: Transcription elongation factor GreA (158 aa).

The protein belongs to the GreA/GreB family.

Its function is as follows. Necessary for efficient RNA polymerase transcription elongation past template-encoded arresting sites. The arresting sites in DNA have the property of trapping a certain fraction of elongating RNA polymerases that pass through, resulting in locked ternary complexes. Cleavage of the nascent transcript by cleavage factors such as GreA or GreB allows the resumption of elongation from the new 3'terminus. GreA releases sequences of 2 to 3 nucleotides. The chain is Transcription elongation factor GreA from Rhizobium etli (strain ATCC 51251 / DSM 11541 / JCM 21823 / NBRC 15573 / CFN 42).